The chain runs to 82 residues: MTFPRALTVIDDNGMVISIIFWFLLIIILILLSIALLNIIKLCMVCCNLGRTVIIVPVQHAYDAYKNFMRIKAYNPDGALLV.

Residues 1–19 (MTFPRALTVIDDNGMVISI) are Virion surface-facing. A helical transmembrane segment spans residues 20–40 (IFWFLLIIILILLSIALLNII). At 41 to 82 (KLCMVCCNLGRTVIIVPVQHAYDAYKNFMRIKAYNPDGALLV) the chain is on the intravirion side.

This sequence belongs to the alphacoronaviruses E protein family. Homopentamer. Interacts with membrane protein M in the budding compartment of the host cell, which is located between endoplasmic reticulum and the Golgi complex. Interacts with Nucleoprotein.

The protein resides in the host Golgi apparatus membrane. In terms of biological role, plays a central role in virus morphogenesis and assembly. Acts as a viroporin and self-assembles in host membranes forming pentameric protein-lipid pores that allow ion transport. Also plays a role in the induction of apoptosis. This Sus scrofa (Pig) protein is Envelope small membrane protein.